A 62-amino-acid chain; its full sequence is Photosystem II reaction center protein K (62 aa).

A propeptide spanning residues Met1–Ala25 is cleaved from the precursor. A helical membrane pass occupies residues Ile33 to Phe53.

It belongs to the PsbK family. PSII is composed of 1 copy each of membrane proteins PsbA, PsbB, PsbC, PsbD, PsbE, PsbF, PsbH, PsbI, PsbJ, PsbK, PsbL, PsbM, PsbT, PsbX, PsbY, PsbZ, Psb30/Ycf12, at least 3 peripheral proteins of the oxygen-evolving complex and a large number of cofactors. It forms dimeric complexes.

It is found in the plastid. It localises to the chloroplast thylakoid membrane. Its function is as follows. One of the components of the core complex of photosystem II (PSII). PSII is a light-driven water:plastoquinone oxidoreductase that uses light energy to abstract electrons from H(2)O, generating O(2) and a proton gradient subsequently used for ATP formation. It consists of a core antenna complex that captures photons, and an electron transfer chain that converts photonic excitation into a charge separation. This Agrostis stolonifera (Creeping bentgrass) protein is Photosystem II reaction center protein K.